The following is a 165-amino-acid chain: Shikimate kinase (165 aa).

11–16 provides a ligand contact to ATP; it reads GAGKTT. Thr15 lines the Mg(2+) pocket. Residues Asp33, Arg57, and Gly78 each coordinate substrate. Arg116 contacts ATP. Arg134 contacts substrate.

This sequence belongs to the shikimate kinase family. In terms of assembly, monomer. The cofactor is Mg(2+).

It is found in the cytoplasm. The catalysed reaction is shikimate + ATP = 3-phosphoshikimate + ADP + H(+). The protein operates within metabolic intermediate biosynthesis; chorismate biosynthesis; chorismate from D-erythrose 4-phosphate and phosphoenolpyruvate: step 5/7. In terms of biological role, catalyzes the specific phosphorylation of the 3-hydroxyl group of shikimic acid using ATP as a cosubstrate. The sequence is that of Shikimate kinase from Bacillus cereus (strain G9842).